A 393-amino-acid chain; its full sequence is Acetyl-CoA acetyltransferase (393 aa).

The Acyl-thioester intermediate role is filled by Cys-90. Active-site proton acceptor residues include His-349 and Cys-379.

It belongs to the thiolase-like superfamily. Thiolase family. Homotetramer.

Its subcellular location is the cytoplasm. The enzyme catalyses 2 acetyl-CoA = acetoacetyl-CoA + CoA. It functions in the pathway biopolymer metabolism; poly-(R)-3-hydroxybutanoate biosynthesis. Its pathway is metabolic intermediate biosynthesis; (R)-mevalonate biosynthesis; (R)-mevalonate from acetyl-CoA: step 1/3. This chain is Acetyl-CoA acetyltransferase, found in Rhizobium meliloti (strain 1021) (Ensifer meliloti).